The primary structure comprises 158 residues: MTIFEGSFTNASTLKVGIVVARFNDLITNKILSGCLDCLKRHGLDTSETSKELDIVWVPGSFELPIAAKTLLKKTNYDVVIALGAVIRGETSHYDVVISEASKGISQVSYENNVPIIFGVLTTDSMQQALERAGIKNNLGWNYALQAIEMGSLIKNLN.

5-amino-6-(D-ribitylamino)uracil-binding positions include Phe23, 61-63, and 85-87; these read SFE and AVI. 90–91 lines the (2S)-2-hydroxy-3-oxobutyl phosphate pocket; that stretch reads ET. Residue His93 is the Proton donor of the active site. Phe118 contacts 5-amino-6-(D-ribitylamino)uracil. Arg132 is a (2S)-2-hydroxy-3-oxobutyl phosphate binding site.

It belongs to the DMRL synthase family.

The enzyme catalyses (2S)-2-hydroxy-3-oxobutyl phosphate + 5-amino-6-(D-ribitylamino)uracil = 6,7-dimethyl-8-(1-D-ribityl)lumazine + phosphate + 2 H2O + H(+). Its pathway is cofactor biosynthesis; riboflavin biosynthesis; riboflavin from 2-hydroxy-3-oxobutyl phosphate and 5-amino-6-(D-ribitylamino)uracil: step 1/2. Functionally, catalyzes the formation of 6,7-dimethyl-8-ribityllumazine by condensation of 5-amino-6-(D-ribitylamino)uracil with 3,4-dihydroxy-2-butanone 4-phosphate. This is the penultimate step in the biosynthesis of riboflavin. This Prochlorococcus marinus subsp. pastoris (strain CCMP1986 / NIES-2087 / MED4) protein is 6,7-dimethyl-8-ribityllumazine synthase.